Consider the following 487-residue polypeptide: Aspartyl/glutamyl-tRNA(Asn/Gln) amidotransferase subunit B (487 aa).

This sequence belongs to the GatB/GatE family. GatB subfamily. Heterotrimer of A, B and C subunits.

The enzyme catalyses L-glutamyl-tRNA(Gln) + L-glutamine + ATP + H2O = L-glutaminyl-tRNA(Gln) + L-glutamate + ADP + phosphate + H(+). It catalyses the reaction L-aspartyl-tRNA(Asn) + L-glutamine + ATP + H2O = L-asparaginyl-tRNA(Asn) + L-glutamate + ADP + phosphate + 2 H(+). Functionally, allows the formation of correctly charged Asn-tRNA(Asn) or Gln-tRNA(Gln) through the transamidation of misacylated Asp-tRNA(Asn) or Glu-tRNA(Gln) in organisms which lack either or both of asparaginyl-tRNA or glutaminyl-tRNA synthetases. The reaction takes place in the presence of glutamine and ATP through an activated phospho-Asp-tRNA(Asn) or phospho-Glu-tRNA(Gln). This Leptospira biflexa serovar Patoc (strain Patoc 1 / Ames) protein is Aspartyl/glutamyl-tRNA(Asn/Gln) amidotransferase subunit B.